A 432-amino-acid polypeptide reads, in one-letter code: Adenylosuccinate synthetase (432 aa).

Residues 13-19 (GDEGKGK) and 41-43 (GHT) contribute to the GTP site. Asp14 (proton acceptor) is an active-site residue. The Mg(2+) site is built by Asp14 and Gly41. IMP contacts are provided by residues 14-17 (DEGK), 39-42 (NAGH), Thr130, Arg144, Gln225, Thr240, and Arg304. His42 serves as the catalytic Proton donor. 300–306 (AVTGRPR) is a substrate binding site. GTP-binding positions include Arg306, 332–334 (KLD), and 415–417 (STG).

It belongs to the adenylosuccinate synthetase family. In terms of assembly, homodimer. The cofactor is Mg(2+).

The protein localises to the cytoplasm. The enzyme catalyses IMP + L-aspartate + GTP = N(6)-(1,2-dicarboxyethyl)-AMP + GDP + phosphate + 2 H(+). The protein operates within purine metabolism; AMP biosynthesis via de novo pathway; AMP from IMP: step 1/2. Functionally, plays an important role in the de novo pathway of purine nucleotide biosynthesis. Catalyzes the first committed step in the biosynthesis of AMP from IMP. This chain is Adenylosuccinate synthetase, found in Actinobacillus succinogenes (strain ATCC 55618 / DSM 22257 / CCUG 43843 / 130Z).